Reading from the N-terminus, the 520-residue chain is Sodium-dependent dicarboxylate transporter SdcS (520 aa).

A run of 14 helical transmembrane segments spans residues 30–50, 55–75, 77–97, 104–124, 160–180, 207–227, 242–262, 298–318, 323–343, 362–382, 399–419, 428–448, 452–472, and 491–511; these read AGQL…LLFF, LPWE…WWIT, AIPI…GHIL, SEYG…AIAM, SMFV…LAII, IGYA…PLII, FAKW…ITWL, KVVQ…EFLL, VTSS…LFVI, ELPW…KGIS, GVSP…LTEV, MILP…LLLM, AMAA…AIIF, and LISA…VLGI.

The protein belongs to the SLC13A/DASS transporter (TC 2.A.47) family. NADC subfamily.

The protein resides in the cell membrane. Functionally, mediates the transport of the dicarboxylates fumarate, malate, and succinate across the cytoplasmic membrane via a Na(+)-electrochemical gradient. The polypeptide is Sodium-dependent dicarboxylate transporter SdcS (sdcS) (Staphylococcus aureus (strain bovine RF122 / ET3-1)).